A 255-amino-acid polypeptide reads, in one-letter code: Putative cysteine-rich repeat secretory protein 27 (255 aa).

The signal sequence occupies residues 1–26; it reads MISKFGSVHILAVVAIQLLIIPSVSS. 2 Gnk2-homologous domains span residues 33–135 and 141–252; these read YLHH…TINS and YEND…LYPF.

It belongs to the cysteine-rich repeat secretory protein family.

It localises to the secreted. In Arabidopsis thaliana (Mouse-ear cress), this protein is Putative cysteine-rich repeat secretory protein 27 (CRRSP27).